Here is a 212-residue protein sequence, read N- to C-terminus: Ropporin-1 (212 aa).

Residues 12–43 (PELPELLKQFTKAAIRTQPPDLIQWAAEYFGA) form the RIIa domain. Ser56 carries the phosphoserine modification. Residues 209–212 (VRLE) are interaction with RHPN1.

The protein belongs to the ropporin family. As to quaternary structure, homodimer. Interacts with AKAP3. May interact with SPA17. Interacts with RHPN1. Interacts with FSCB; the interaction increases upon spermatozoa capacitation conditions. Interacts with CFAP61. Sumoylated, sumoylation decreases upon spermatozoa capacitation conditions.

It is found in the cell projection. Its subcellular location is the cilium. The protein localises to the flagellum. Functionally, important for male fertility. With ROPN1L, involved in fibrous sheath integrity and sperm motility, plays a role in PKA-dependent signaling processes required for spermatozoa capacitation. This chain is Ropporin-1 (Ropn1), found in Rattus norvegicus (Rat).